The sequence spans 544 residues: Rubrofusarin-specific efflux pump aurT (544 aa).

The span at 1 to 12 (MTDNTDMEKLDR) shows a compositional bias: basic and acidic residues. The segment at 1-42 (MTDNTDMEKLDRATTPTPIPNEAPPTSEPSESKPEEAEDESK) is disordered. The segment covering 17-27 (TPIPNEAPPTS) has biased composition (pro residues). The segment covering 30–42 (SESKPEEAEDESK) has biased composition (basic and acidic residues). The next 8 helical transmembrane spans lie at 45–65 (HGLK…LVAL), 89–111 (WYAS…IFTF), 116–136 (TVYL…GVAP), 146–166 (AIAG…ITTV), 177–197 (GMMG…GGAF), 205–225 (WCFY…ILLF), 246–266 (WGNL…QWGG), and 276–296 (IVAL…IQIW). N-linked (GlcNAc...) asparagine glycosylation is present at N300. 6 consecutive transmembrane segments (helical) span residues 318-338 (IFAF…PIWF), 357-377 (VLSL…VGWF), 380-400 (VFFS…TFVV), 407-427 (WIGY…LASL), 444-464 (LMFF…QAVF), and 514-534 (YFYV…GIEW).

It belongs to the major facilitator superfamily. TCR/Tet family.

The protein resides in the cell membrane. The protein operates within pigment biosynthesis. Functionally, rubrofusarin-specific efflux pump; part of the gene cluster that mediates the biosynthesis of aurofusarin, a red mycelium pigment which is acting as a mycotoxin. The first step is performed by the polyketide synthase which condenses one acetyl-CoA and 6 malonyl-CoA units to form the first intermediate, the cyclic heptaketide and yellow pigment YWA1. The C2 hydroxyl group in the pyrone ring of YWA1 is probably formed during ring closure by an aldol-type cyclization reaction. The dehydratase aurZ then acts as the first tailoring enzyme in the aurofusarin biosynthetic pathway by converting YWA1 to nor-rubrofusarin. Nor-rubrofusarin is then methylated to rubrofusarin by the O-methyltransferase aurJ. Rubrofusarin is then transported across the plasma membrane by the rubrofusarin-specific pump aurT for further enzymatic processing by the extracellular complex composed of GIP1, aurF, aurO and aurS to yield aurofusarin. This is Rubrofusarin-specific efflux pump aurT from Gibberella zeae (strain ATCC MYA-4620 / CBS 123657 / FGSC 9075 / NRRL 31084 / PH-1) (Wheat head blight fungus).